We begin with the raw amino-acid sequence, 487 residues long: Serralysin (487 aa).

Positions 1-16 (MQSTKKAIEITESNFA) are excised as a propeptide. Residue His-192 coordinates Zn(2+). The active site involves Glu-193. Zn(2+) is bound by residues His-196, His-202, and Tyr-232. Residues Arg-269, Gly-271, Thr-273, Asp-301, Gly-303, Gly-304, Asp-306, Thr-343, Glu-345, Gly-350, Gly-352, Asp-354, Asn-359, Ala-361, Asn-363, Gly-367, Gly-368, Ala-369, Asp-372, Gly-376, Gly-377, Gly-378, Gly-379, Asp-381, Gly-385, Gly-386, Ala-387, Gly-388, Asp-390, Asp-399, Asp-406, and Asp-416 each coordinate Ca(2+). 2 Hemolysin-type calcium-binding repeats span residues 348–365 (IGGSGNDVIVGNAANNVL) and 366–383 (KGGAGNDVLFGGGGADEL).

Belongs to the peptidase M10B family. Ca(2+) is required as a cofactor. It depends on Zn(2+) as a cofactor.

It localises to the secreted. It catalyses the reaction Preferential cleavage of bonds with hydrophobic residues in P1'.. In terms of biological role, naturally present in the silkworm intestine and allows the emerging moth to dissolve its cocoon. The chain is Serralysin from Serratia marcescens (strain ATCC 21074 / E-15).